Consider the following 350-residue polypeptide: tRNA uridine(34) hydroxylase (350 aa).

In terms of domain architecture, Rhodanese spans 146–240 (DDPDAVFIDM…YARRAREQGL (95 aa)). The active-site Cysteine persulfide intermediate is Cys-200. A compositionally biased stretch (basic and acidic residues) spans 319–328 (RRRRAGRENG). Residues 319 to 350 (RRRRAGRENGNKIFNKSRGRLNSKLSIPDPAE) are disordered.

The protein belongs to the TrhO family.

The enzyme catalyses uridine(34) in tRNA + AH2 + O2 = 5-hydroxyuridine(34) in tRNA + A + H2O. Functionally, catalyzes oxygen-dependent 5-hydroxyuridine (ho5U) modification at position 34 in tRNAs. The polypeptide is tRNA uridine(34) hydroxylase (Salmonella choleraesuis (strain SC-B67)).